The chain runs to 93 residues: Small ribosomal subunit protein bS20 (93 aa).

The segment covering 1-18 (MPLHKSAEKRLRQSEKRN) has biased composition (basic and acidic residues). The interval 1–25 (MPLHKSAEKRLRQSEKRNARNRARK) is disordered.

It belongs to the bacterial ribosomal protein bS20 family.

In terms of biological role, binds directly to 16S ribosomal RNA. The polypeptide is Small ribosomal subunit protein bS20 (Chlorobium chlorochromatii (strain CaD3)).